Reading from the N-terminus, the 510-residue chain is Serine/threonine-protein kinase RIO3 (510 aa).

2 disordered regions span residues 100-126 (GSSS…ENED) and 143-191 (DEEN…DMVG). 2 stretches are compositionally biased toward basic and acidic residues: residues 108–118 (TPDRYHPKTMQ) and 162–179 (TKHD…KTFN). The 276-residue stretch at 235 to 510 (LLLLKWINQG…RGISPAREYN (276 aa)) folds into the Protein kinase domain. ATP contacts are provided by residues 241–249 (INQGVFDSV) and Lys-275. The active-site Proton acceptor is Asp-388. A compositionally biased stretch (basic and acidic residues) spans 474–499 (RSVDLRHDKSRPADMELKKYNEEKKA). Residues 474–510 (RSVDLRHDKSRPADMELKKYNEEKKANRGISPAREYN) are disordered.

The protein belongs to the protein kinase superfamily. RIO-type Ser/Thr kinase family. Mg(2+) serves as cofactor. As to expression, expressed in tail neurons (PVQ and PHAL/PQR).

It catalyses the reaction L-seryl-[protein] + ATP = O-phospho-L-seryl-[protein] + ADP + H(+). The catalysed reaction is L-threonyl-[protein] + ATP = O-phospho-L-threonyl-[protein] + ADP + H(+). The sequence is that of Serine/threonine-protein kinase RIO3 (riok-3) from Caenorhabditis elegans.